A 267-amino-acid chain; its full sequence is tRNA-cytidine(32) 2-sulfurtransferase 1 (267 aa).

Positions 42-47 match the PP-loop motif motif; sequence SGGKDS. 3 residues coordinate [4Fe-4S] cluster: cysteine 117, cysteine 120, and cysteine 208.

It belongs to the TtcA family. As to quaternary structure, homodimer. Requires Mg(2+) as cofactor. [4Fe-4S] cluster serves as cofactor.

It is found in the cytoplasm. It catalyses the reaction cytidine(32) in tRNA + S-sulfanyl-L-cysteinyl-[cysteine desulfurase] + AH2 + ATP = 2-thiocytidine(32) in tRNA + L-cysteinyl-[cysteine desulfurase] + A + AMP + diphosphate + H(+). It participates in tRNA modification. In terms of biological role, catalyzes the ATP-dependent 2-thiolation of cytidine in position 32 of tRNA, to form 2-thiocytidine (s(2)C32). The sulfur atoms are provided by the cysteine/cysteine desulfurase (IscS) system. The chain is tRNA-cytidine(32) 2-sulfurtransferase 1 from Francisella tularensis subsp. tularensis (strain FSC 198).